The sequence spans 28 residues: Ranatuerin-2AVb (28 aa).

A disulfide bridge connects residues cysteine 23 and cysteine 28.

In terms of tissue distribution, expressed by the skin glands.

Its subcellular location is the secreted. In terms of biological role, has antibacterial activity. The chain is Ranatuerin-2AVb from Rana arvalis (Moor frog).